We begin with the raw amino-acid sequence, 325 residues long: Elongation factor P--(R)-beta-lysine ligase (325 aa).

S76–E78 is a binding site for substrate. ATP is bound by residues R100–E102 and N109. Residue Y118 coordinates substrate. E244–L245 is a binding site for ATP. E251 provides a ligand contact to substrate. G300 is an ATP binding site.

This sequence belongs to the class-II aminoacyl-tRNA synthetase family. EpmA subfamily. Homodimer.

It catalyses the reaction D-beta-lysine + L-lysyl-[protein] + ATP = N(6)-((3R)-3,6-diaminohexanoyl)-L-lysyl-[protein] + AMP + diphosphate + H(+). With EpmB is involved in the beta-lysylation step of the post-translational modification of translation elongation factor P (EF-P) on 'Lys-34'. Catalyzes the ATP-dependent activation of (R)-beta-lysine produced by EpmB, forming a lysyl-adenylate, from which the beta-lysyl moiety is then transferred to the epsilon-amino group of EF-P 'Lys-34'. The sequence is that of Elongation factor P--(R)-beta-lysine ligase from Salmonella arizonae (strain ATCC BAA-731 / CDC346-86 / RSK2980).